A 188-amino-acid polypeptide reads, in one-letter code: Elongation factor P-like protein (188 aa).

This sequence belongs to the elongation factor P family.

This chain is Elongation factor P-like protein, found in Marinobacter nauticus (strain ATCC 700491 / DSM 11845 / VT8) (Marinobacter aquaeolei).